The primary structure comprises 301 residues: MEYFELILKTKKDLEEPIIAILEILGSKGTAIEDNFFDNSVLWDYVDEEFAERDYVLIRSYFDKDTDMEEIINRLKARIKENFEGLGDVEDVEYRVVKEEDWANEWKKYAKPIYVGRILILPSWEKVDTTEDKILVIMDPGMAFGSGSHPTTIMCIEMLQKYLKEGMDVLDVGTGSGILSIVAKKLGAGKVKGIDIDKKAVEVAKENAKRNNVELEFQQANLTIGIEDKYDIVVANLIAEIILKLNSEVKRVLKESGVYITSGIIGEKLDMVLKSFEENNIKILEIREKEGWFTVVGKNED.

4 residues coordinate S-adenosyl-L-methionine: Thr-152, Gly-173, Asp-195, and Asn-236.

Belongs to the methyltransferase superfamily. PrmA family.

The protein resides in the cytoplasm. It catalyses the reaction L-lysyl-[protein] + 3 S-adenosyl-L-methionine = N(6),N(6),N(6)-trimethyl-L-lysyl-[protein] + 3 S-adenosyl-L-homocysteine + 3 H(+). Its function is as follows. Methylates ribosomal protein L11. This is Ribosomal protein L11 methyltransferase from Dictyoglomus thermophilum (strain ATCC 35947 / DSM 3960 / H-6-12).